Reading from the N-terminus, the 490-residue chain is Inosine-5'-monophosphate dehydrogenase (490 aa).

CBS domains follow at residues 96–154 and 158–218; these read MIIN…SKPV and MTKE…CKDE. Residues D252 and 302–304 each bind NAD(+); that span reads GVG. K(+)-binding residues include G304 and G306. S307 lines the IMP pocket. C309 contacts K(+). Catalysis depends on C309, which acts as the Thioimidate intermediate. Residues 342 to 344, 365 to 366, and 389 to 393 contribute to the IMP site; these read DGG, GN, and YRGMG. R406 (proton acceptor) is an active-site residue. Residue E418 coordinates IMP. K(+) is bound by residues E472, S473, and H474.

It belongs to the IMPDH/GMPR family. Homotetramer. Requires K(+) as cofactor.

It catalyses the reaction IMP + NAD(+) + H2O = XMP + NADH + H(+). It functions in the pathway purine metabolism; XMP biosynthesis via de novo pathway; XMP from IMP: step 1/1. Its activity is regulated as follows. Mycophenolic acid (MPA) is a non-competitive inhibitor that prevents formation of the closed enzyme conformation by binding to the same site as the amobile flap. In contrast, mizoribine monophosphate (MZP) is a competitive inhibitor that induces the closed conformation. MPA is a potent inhibitor of mammalian IMPDHs but a poor inhibitor of the bacterial enzymes. MZP is a more potent inhibitor of bacterial IMPDH. Catalyzes the conversion of inosine 5'-phosphate (IMP) to xanthosine 5'-phosphate (XMP), the first committed and rate-limiting step in the de novo synthesis of guanine nucleotides, and therefore plays an important role in the regulation of cell growth. This is Inosine-5'-monophosphate dehydrogenase from Aquifex aeolicus (strain VF5).